Consider the following 459-residue polypeptide: Alpha-N-acetylgalactosaminidase (459 aa).

The tat-type signal signal peptide spans 1–31; sequence MHNIHRRHFLKAAGAVTAGLVTANIALNANA. NAD(+) is bound by residues 64–65, aspartate 86, 135–138, 155–156, and asparagine 184; these read ER, WEWH, and EV. Substrate contacts are provided by residues tyrosine 213, arginine 232, 244 to 247, and tyrosine 326; that span reads YPTH. Tyrosine 244 provides a ligand contact to NAD(+).

This sequence belongs to the Gfo/Idh/MocA family. Glycosyl hydrolase 109 subfamily. Requires NAD(+) as cofactor. In terms of processing, predicted to be exported by the Tat system. The position of the signal peptide cleavage has not been experimentally proven.

It carries out the reaction Cleavage of non-reducing alpha-(1-&gt;3)-N-acetylgalactosamine residues from human blood group A and AB mucin glycoproteins, Forssman hapten and blood group A lacto series glycolipids.. In terms of biological role, glycosidase that has specific alpha-N-acetylgalactosaminidase activity. The chain is Alpha-N-acetylgalactosaminidase (nagA) from Shewanella oneidensis (strain ATCC 700550 / JCM 31522 / CIP 106686 / LMG 19005 / NCIMB 14063 / MR-1).